The chain runs to 82 residues: MRTFTLIAILTCALLVIYHAAEAEELEAKDVIESKALATLDEERFECSLSCDIKKNGKPCKGSGEKKCSGGWRCKMNFCLKF.

Positions 1–23 (MRTFTLIAILTCALLVIYHAAEA) are cleaved as a signal peptide. Positions 24 to 44 (EELEAKDVIESKALATLDEER) are excised as a propeptide.

Belongs to the neurotoxin 12 (Hwtx-2) family. 03 (juruin) subfamily. Post-translationally, contains 3 disulfide bonds. Two different connectivities are observed in similar proteins (C1-C3, C2-C5, C4-C6 or C1-C4, C2-C5, C3-C6). In terms of tissue distribution, expressed by the venom gland.

The protein localises to the secreted. In terms of biological role, this toxin causes paralysis and death to sheep blowflies. It does not target insect sodium channels. The polypeptide is U1-theraphotoxin-Ct1b (Coremiocnemis tropix (Australian tarantula spider)).